Reading from the N-terminus, the 264-residue chain is Glutamate racemase (264 aa).

Residues aspartate 12–serine 13 and tyrosine 44–glycine 45 contribute to the substrate site. Cysteine 76 acts as the Proton donor/acceptor in catalysis. Asparagine 77–threonine 78 provides a ligand contact to substrate. Catalysis depends on cysteine 186, which acts as the Proton donor/acceptor. Threonine 187–histidine 188 is a binding site for substrate.

This sequence belongs to the aspartate/glutamate racemases family.

It carries out the reaction L-glutamate = D-glutamate. Its pathway is cell wall biogenesis; peptidoglycan biosynthesis. Its function is as follows. Provides the (R)-glutamate required for cell wall biosynthesis. The chain is Glutamate racemase from Fusobacterium nucleatum subsp. nucleatum (strain ATCC 25586 / DSM 15643 / BCRC 10681 / CIP 101130 / JCM 8532 / KCTC 2640 / LMG 13131 / VPI 4355).